The primary structure comprises 349 residues: Green-sensitive opsin-4 (349 aa).

The Extracellular segment spans residues 1–36; sequence MNGTEGNNFYIPLSNRTGLARSPYEYPQYYLAEPWQ. 2 N-linked (GlcNAc...) asparagine glycosylation sites follow: Asn-2 and Asn-15. The chain crosses the membrane as a helical span at residues 37–61; that stretch reads FKLLAVYMFFLICLGFPINGLTLLV. At 62-73 the chain is on the cytoplasmic side; that stretch reads TAQHKKLRQPLN. A helical transmembrane segment spans residues 74 to 99; sequence FILVNLAVAGTIMVCFGFTVTFYTAI. Topologically, residues 100 to 113 are extracellular; it reads NGYFVLGPTGCAIE. A disulfide bridge connects residues Cys-110 and Cys-187. A helical membrane pass occupies residues 114–133; sequence GFMATLGGEVALWSLVVLAV. Residues 134–152 are Cytoplasmic-facing; sequence ERYIVVCKPMGSFKFSASH. A helical transmembrane segment spans residues 153-176; sequence AFAGCAFTWVMAMACAAPPLVGWS. The Extracellular portion of the chain corresponds to 177 to 202; that stretch reads RYIPEGMQCSCGPDYYTLNPEYNNES. Asn-200 carries an N-linked (GlcNAc...) asparagine glycan. A helical transmembrane segment spans residues 203–230; the sequence is YVLYMFICHFILPVTIIFFTYGRLVCTV. The Cytoplasmic portion of the chain corresponds to 231-252; sequence KAAAAQQQESESTQKAEREVTR. The helical transmembrane segment at 253-276 threads the bilayer; the sequence is MVILMVLGFLIAWTPYATVAAWIF. Topologically, residues 277–284 are extracellular; sequence FNKGAAFS. The chain crosses the membrane as a helical span at residues 285 to 309; it reads AQFMAVPAFFSKTSALYNPVIYVLL. Lys-296 is modified (N6-(retinylidene)lysine). The Cytoplasmic segment spans residues 310–349; it reads NKQFRNCMLTTLFCGKNPLGDDESSTVSTSKTEVSSVSPA. The interval 329–349 is disordered; that stretch reads GDDESSTVSTSKTEVSSVSPA. Positions 334-349 are enriched in low complexity; sequence STVSTSKTEVSSVSPA.

It belongs to the G-protein coupled receptor 1 family. Opsin subfamily. Post-translationally, phosphorylated on some or all of the serine and threonine residues present in the C-terminal region. Retinal double cone accessory photoreceptor cell outer segments.

It is found in the membrane. Visual pigments are the light-absorbing molecules that mediate vision. They consist of an apoprotein, opsin, covalently linked to cis-retinal. The polypeptide is Green-sensitive opsin-4 (opn1mw4) (Danio rerio (Zebrafish)).